A 101-amino-acid polypeptide reads, in one-letter code: NAD(P)H-quinone oxidoreductase subunit 4L, chloroplastic (101 aa).

The next 3 helical transmembrane spans lie at 2–22 (MLEH…YGLI), 32–52 (MCLE…SGFF), and 61–81 (IFSV…LAIV).

Belongs to the complex I subunit 4L family. As to quaternary structure, NDH is composed of at least 16 different subunits, 5 of which are encoded in the nucleus.

The protein localises to the plastid. It is found in the chloroplast thylakoid membrane. It catalyses the reaction a plastoquinone + NADH + (n+1) H(+)(in) = a plastoquinol + NAD(+) + n H(+)(out). The catalysed reaction is a plastoquinone + NADPH + (n+1) H(+)(in) = a plastoquinol + NADP(+) + n H(+)(out). Its function is as follows. NDH shuttles electrons from NAD(P)H:plastoquinone, via FMN and iron-sulfur (Fe-S) centers, to quinones in the photosynthetic chain and possibly in a chloroplast respiratory chain. The immediate electron acceptor for the enzyme in this species is believed to be plastoquinone. Couples the redox reaction to proton translocation, and thus conserves the redox energy in a proton gradient. The protein is NAD(P)H-quinone oxidoreductase subunit 4L, chloroplastic of Jasminum nudiflorum (Winter jasmine).